Here is a 603-residue protein sequence, read N- to C-terminus: Bud site selection protein 8 (603 aa).

Residues 1–10 (MIQSDEDNLD) show a composition bias toward acidic residues. 3 disordered regions span residues 1-25 (MIQS…GTSS), 83-150 (ASTS…SPSS), and 190-212 (ANRG…EPNE). Over 1–515 (MIQSDEDNLD…GFRDVYSIEN (515 aa)) the chain is Extracellular. Composition is skewed to low complexity over residues 11–25 (SSET…GTSS) and 84–95 (STSSSSSSNSSS). N-linked (GlcNAc...) asparagine glycans are attached at residues N92, N110, N211, N240, N271, and N333. Residues 96–115 (ITQFHDTQDNNIPSNTTVRP) show a composition bias toward polar residues. The interval 286 to 479 (AGSIKSSTSD…NRKEDRHDAE (194 aa)) is disordered. Over residues 325–335 (PSHNSDSSNES) the composition is skewed to low complexity. The segment covering 336–350 (SPKDHIGHNNEEKFS) has biased composition (basic and acidic residues). N-linked (GlcNAc...) asparagine glycosylation is found at N396 and N423. A compositionally biased stretch (polar residues) spans 439–452 (KSQSSESDTGQNSI). Residues 463–479 (KQQEKTDNRKEDRHDAE) show a composition bias toward basic and acidic residues. A helical transmembrane segment spans residues 516–536 (IIVILLCCSIVPPLFFIIGCS). The Cytoplasmic segment spans residues 537–577 (SRRKLVSDYRLMRLLMNKEHRAALLQGFIWDVDLRWFRMFC). Residues 578 to 598 (LILGAAETVIVMAGIAIGFGV) traverse the membrane as a helical segment. The Extracellular portion of the chain corresponds to 599–603 (GITRE).

It belongs to the BUD8/9 family. Interacts with RAX1 RAX2 at the proximal or distal pole in unbudded cells. In terms of processing, N- and O-glycosylated.

Its subcellular location is the cell membrane. The protein resides in the bud tip. Its function is as follows. Involved in positioning the distal bud pole signal. This is Bud site selection protein 8 from Saccharomyces cerevisiae (strain ATCC 204508 / S288c) (Baker's yeast).